The following is a 476-amino-acid chain: MGRAFVHVILGGGVAAGYAALEFARRGGYSRGELCIISEETVAPYERPALSKGYLLPEGAARLPGFHTCVGANDELLTAKWYKENGIELVLGTKVITADVRMKTLLTATGETISYKNLIIATGARALKLEEFGISGSDASNICYLRNLDDADKLVNVMKSCPGGNAVVIGGGYIGMECAAALVTNRIKVTMVFPESHCMARLFTPKIAEYYENYYTSKGVTFVKGTVLTSFEKDSTGKVTSVILKDGKHLPADMVVVGIGIRASTGLFEGQLLMEQGGIKVNGQMLTSDGSVYAVGDVAAFPIKLFDGVIRRLEHVDSARRTARHAVAAILEPSKTKDIDYLPFFYSRVFTLSWQFYGNNTGEVVHFGDFTNSSPRFGAYWVDKSRIRGAFLEGGSREEYEAISNVVRRKAKVINIAELEKQGLMFAIQESQKDLPDGGLALGEKPTYVWHATAGVIAAASIAAFGYWYGRKRRRW.

Topologically, residues 1–3 are cytoplasmic; the sequence is MGR. Residues 4-24 form a helical membrane-spanning segment; sequence AFVHVILGGGVAAGYAALEFA. FAD-binding positions include 12-15, E40, R47, K52, and 146-147; these read GGVA and RN. Topologically, residues 25–447 are peroxisomal; the sequence is RRGGYSRGEL…GGLALGEKPT (423 aa). NAD(+) contacts are provided by residues 171-177, E195, R201, and G260; that span reads GGYIGME. 173 to 177 provides a ligand contact to NADP(+); that stretch reads YIGME. NADP(+) contacts are provided by R201 and G260. D297 contacts FAD. Residue 314–315 coordinates NAD(+); the sequence is EH. Residue 314–315 coordinates NADP(+); the sequence is EH. V316 contacts FAD. Residue R320 participates in L-ascorbate binding. Position 346 (Y346) interacts with FAD. Y346 serves as a coordination point for NAD(+). Y346 serves as a coordination point for NADP(+). An L-ascorbate-binding site is contributed by R348. Residues 448 to 468 form a helical membrane-spanning segment; sequence YVWHATAGVIAAASIAAFGYW. At 469-476 the chain is on the cytoplasmic side; sequence YGRKRRRW.

Belongs to the FAD-dependent oxidoreductase family. FAD is required as a cofactor.

It is found in the peroxisome membrane. The enzyme catalyses 2 monodehydro-L-ascorbate radical + NADH + H(+) = 2 L-ascorbate + NAD(+). Its function is as follows. Catalyzes the conversion of monodehydroascorbate to ascorbate, oxidizing NADH in the process. Ascorbate is a major antioxidant against reactive oxygen species (ROS) and nitric oxide (NO). This is Monodehydroascorbate reductase 2, peroxisomal from Oryza sativa subsp. japonica (Rice).